The primary structure comprises 875 residues: Serine/threonine-protein kinase D2 (875 aa).

The tract at residues 1 to 33 (MAAAPSHPAGLPCSPGPGSPPPPGGSDLQSLPP) is disordered. The span at 14–24 (SPGPGSPPPPG) shows a compositional bias: pro residues. Ser-26 and Ser-30 each carry phosphoserine. Tyr-87 carries the phosphotyrosine modification. Residues 138–188 (PHALTVHSYRAPAFCDHCGEMLFGLVRQGLKCDGCGLNYHKRCAFSIPNNC) form a Phorbol-ester/DAG-type 1 zinc finger. Phosphoserine occurs at positions 197, 198, 200, 203, 206, 211, 212, and 214. Residues 224–247 (RSTTDLLPRRPPSSSSSSSSSSFY) form a disordered region. A compositionally biased stretch (low complexity) spans 236–245 (SSSSSSSSSS). Ser-244 is subject to Phosphoserine; by CSNK1D and CSNK1E. Residue Ser-245 is modified to Phosphoserine. The Phorbol-ester/DAG-type 2 zinc finger occupies 265 to 315 (PHTFLIHSYTRPTVCQACKKLLKGLFRQGLQCKDCKFNCHKRCATRVPNDC). A PH domain is found at 398–510 (TTLREGWVVH…WETAIRQALM (113 aa)). Residue Tyr-408 is modified to Phosphotyrosine. The residue at position 439 (Tyr-439) is a Phosphotyrosine; by ABL1. Ser-519 carries the post-translational modification Phosphoserine. Positions 552-808 (IFPDEVLGSG…VDKSLSHPWL (257 aa)) constitute a Protein kinase domain. ATP contacts are provided by residues 558–566 (LGSGQFGVV) and Lys-581. Asp-675 (proton acceptor) is an active-site residue. At Ser-707 the chain carries Phosphoserine; by PKC. Residue Ser-711 is modified to Phosphoserine. Phosphotyrosine; by ABL1 is present on Tyr-718. The short motif at 725–727 (LNQ) is the Important for ABL1-mediated Tyr-718 phosphorylation element. At Ser-873 the chain carries Phosphoserine; by autocatalysis.

It belongs to the protein kinase superfamily. CAMK Ser/Thr protein kinase family. PKD subfamily. In terms of assembly, interacts (via C-terminus) with LCK. Interacts (via N-terminus and zing-finger domain 1 and 2) with PRKCD in response to oxidative stress; the interaction is independent of PRKD2 tyrosine phosphorylation. Mg(2+) is required as a cofactor. In terms of processing, phosphorylation of Ser-873 correlates with the activation status of the kinase. Ser-707 is probably phosphorylated by PKC. Phosphorylation at Ser-244 by CSNK1D and CSNK1E promotes nuclear localization and substrate targeting. Phosphorylation at Ser-244, Ser-707 and Ser-711 is required for nuclear localization. Phosphorylated at Tyr-438 by ABL1 in response to oxidative stress. Phosphorylated at Tyr-718 by ABL1 specifically in response to oxidative stress; requires prior phosphorylation at Ser-707 or/and Ser-711.

It is found in the cytoplasm. It localises to the cell membrane. Its subcellular location is the golgi apparatus. The protein resides in the trans-Golgi network. It carries out the reaction L-seryl-[protein] + ATP = O-phospho-L-seryl-[protein] + ADP + H(+). It catalyses the reaction L-threonyl-[protein] + ATP = O-phospho-L-threonyl-[protein] + ADP + H(+). Activated by DAG and phorbol esters. Phorbol-ester/DAG-type domains bind DAG, mediating translocation to membranes. Autophosphorylation of Ser-711 and phosphorylation of Ser-707 by PKC relieves auto-inhibition by the PH domain. Catalytic activity is further increased by phosphorylation at Tyr-718 in response to oxidative stress. Functionally, serine/threonine-protein kinase that converts transient diacylglycerol (DAG) signals into prolonged physiological effects downstream of PKC, and is involved in the regulation of cell proliferation via MAPK1/3 (ERK1/2) signaling, oxidative stress-induced NF-kappa-B activation, inhibition of HDAC7 transcriptional repression, signaling downstream of T-cell antigen receptor (TCR) and cytokine production, and plays a role in Golgi membrane trafficking, angiogenesis, secretory granule release and cell adhesion. May potentiate mitogenesis induced by the neuropeptide bombesin by mediating an increase in the duration of MAPK1/3 (ERK1/2) signaling, which leads to accumulation of immediate-early gene products including FOS that stimulate cell cycle progression. In response to oxidative stress, is phosphorylated at Tyr-438 and Tyr-718 by ABL1, which leads to the activation of PRKD2 without increasing its catalytic activity, and mediates activation of NF-kappa-B. In response to the activation of the gastrin receptor CCKBR, is phosphorylated at Ser-244 by CSNK1D and CSNK1E, translocates to the nucleus, phosphorylates HDAC7, leading to nuclear export of HDAC7 and inhibition of HDAC7 transcriptional repression of NR4A1/NUR77. Upon TCR stimulation, is activated independently of ZAP70, translocates from the cytoplasm to the nucleus and is required for interleukin-2 (IL2) promoter up-regulation. During adaptive immune responses, is required in peripheral T-lymphocytes for the production of the effector cytokines IL2 and IFNG after TCR engagement and for optimal induction of antibody responses to antigens. In epithelial cells stimulated with lysophosphatidic acid (LPA), is activated through a PKC-dependent pathway and mediates LPA-stimulated interleukin-8 (IL8) secretion via a NF-kappa-B-dependent pathway. During TCR-induced T-cell activation, interacts with and is activated by the tyrosine kinase LCK, which results in the activation of the NFAT transcription factors. In the trans-Golgi network (TGN), regulates the fission of transport vesicles that are on their way to the plasma membrane and in polarized cells is involved in the transport of proteins from the TGN to the basolateral membrane. Plays an important role in endothelial cell proliferation and migration prior to angiogenesis, partly through modulation of the expression of KDR/VEGFR2 and FGFR1, two key growth factor receptors involved in angiogenesis. In secretory pathway, is required for the release of chromogranin-A (CHGA)-containing secretory granules from the TGN. Downstream of PRKCA, plays important roles in angiotensin-2-induced monocyte adhesion to endothelial cells. The chain is Serine/threonine-protein kinase D2 (Prkd2) from Rattus norvegicus (Rat).